Reading from the N-terminus, the 157-residue chain is MPRRGNIERRPIPPDARYNSVLVQKFINKVMERGKKSLAERIVYQALDLAAERLKKPQMEIFEQALRNASPSIEVRPKRVGGATYQVPVEVKSDRRYSLAMRWLLMSARARTGKPMVERLAAELIDAYNNTGTTIKRKEDVHRMAEANRAFAHYGRL.

The protein belongs to the universal ribosomal protein uS7 family. As to quaternary structure, part of the 30S ribosomal subunit. Contacts proteins S9 and S11.

In terms of biological role, one of the primary rRNA binding proteins, it binds directly to 16S rRNA where it nucleates assembly of the head domain of the 30S subunit. Is located at the subunit interface close to the decoding center, probably blocks exit of the E-site tRNA. The polypeptide is Small ribosomal subunit protein uS7 (Chloroflexus aurantiacus (strain ATCC 29366 / DSM 635 / J-10-fl)).